Here is a 110-residue protein sequence, read N- to C-terminus: MEARAIAKYMRISPRKVRLVAENIKGKPVEEALNILKFTPKKGAEMLSKVLYSAVANAEQIPGVDVDSLCVDIVKVDEGPTWKRIQPRAMGRAYRIRKRTSHITVVVKEM.

This sequence belongs to the universal ribosomal protein uL22 family. In terms of assembly, part of the 50S ribosomal subunit.

Functionally, this protein binds specifically to 23S rRNA; its binding is stimulated by other ribosomal proteins, e.g. L4, L17, and L20. It is important during the early stages of 50S assembly. It makes multiple contacts with different domains of the 23S rRNA in the assembled 50S subunit and ribosome. Its function is as follows. The globular domain of the protein is located near the polypeptide exit tunnel on the outside of the subunit, while an extended beta-hairpin is found that lines the wall of the exit tunnel in the center of the 70S ribosome. This is Large ribosomal subunit protein uL22 from Maridesulfovibrio salexigens (strain ATCC 14822 / DSM 2638 / NCIMB 8403 / VKM B-1763) (Desulfovibrio salexigens).